Consider the following 525-residue polypeptide: GMP synthase [glutamine-hydrolyzing] (525 aa).

Residues 8–207 (KILILDFGSQ…ALEICACAAN (200 aa)) enclose the Glutamine amidotransferase type-1 domain. Catalysis depends on cysteine 85, which acts as the Nucleophile. Residues histidine 181 and glutamate 183 contribute to the active site. The region spanning 208–400 (WKPASIIEDA…LGLPYNMLYR (193 aa)) is the GMPS ATP-PPase domain. 235 to 241 (SGGVDSS) lines the ATP pocket.

As to quaternary structure, homodimer.

It carries out the reaction XMP + L-glutamine + ATP + H2O = GMP + L-glutamate + AMP + diphosphate + 2 H(+). It functions in the pathway purine metabolism; GMP biosynthesis; GMP from XMP (L-Gln route): step 1/1. Its function is as follows. Catalyzes the synthesis of GMP from XMP. The polypeptide is GMP synthase [glutamine-hydrolyzing] (Shewanella halifaxensis (strain HAW-EB4)).